The sequence spans 357 residues: Ion-translocating oxidoreductase complex subunit D (357 aa).

Transmembrane regions (helical) follow at residues Val35–Val55, Leu88–Gly108, and Leu119–Thr139. Position 176 is an FMN phosphoryl threonine (Thr176). 5 helical membrane passes run Ala209–Ile229, Val233–Phe253, Tyr261–Ala281, Ala295–Pro315, and Glu316–Ile336.

It belongs to the NqrB/RnfD family. In terms of assembly, the complex is composed of six subunits: RnfA, RnfB, RnfC, RnfD, RnfE and RnfG. FMN serves as cofactor.

It localises to the cell inner membrane. In terms of biological role, part of a membrane-bound complex that couples electron transfer with translocation of ions across the membrane. The protein is Ion-translocating oxidoreductase complex subunit D of Halorhodospira halophila (strain DSM 244 / SL1) (Ectothiorhodospira halophila (strain DSM 244 / SL1)).